Reading from the N-terminus, the 421-residue chain is MMSMNSKQPHFAMHPTLPEHKYPSLHSSSEAIRRACLPTPPLQSNLFASLDETLLARAEALAAVDIAVSQGKSHPFKPDATYHTMNSVPCTSTSTVPLAHHHHHHHHHQALEPGDLLDHISSPSLALMAGAGGAGAAGGGGGAHDGPGGGGGPGGGGGPGGGGPGGGGGGGGPGGGGGGPGGGLLGGSAHPHPHMHGLGHLSHPAAAAAMNMPSGLPHPGLVAAAAHHGAAAAAAAAAAGQVAAASAAAAVVGAAGLASICDSDTDPRELEAFAERFKQRRIKLGVTQADVGSALANLKIPGVGSLSQSTICRFESLTLSHNNMIALKPILQAWLEEAEGAQREKMNKPELFNGGEKKRKRTSIAAPEKRSLEAYFAVQPRPSSEKIAAIAEKLDLKKNVVRVWFCNQRQKQKRMKFSATY.

The POU-IV box motif lies at 57–66 (RAEALAAVDI). Disordered stretches follow at residues 94 to 117 (STVP…GDLL) and 133 to 200 (GAGA…GLGH). Residues 99 to 108 (AHHHHHHHHH) are compositionally biased toward basic residues. Residues 133–186 (GAGAAGGGGGAHDGPGGGGGPGGGGGPGGGGPGGGGGGGGPGGGGGGPGGGLLG) are compositionally biased toward gly residues. In terms of domain architecture, POU-specific spans 262-339 (DSDTDPRELE…ILQAWLEEAE (78 aa)). Residues 357 to 416 (KKRKRTSIAAPEKRSLEAYFAVQPRPSSEKIAAIAEKLDLKKNVVRVWFCNQRQKQKRMK) constitute a DNA-binding region (homeobox).

The protein belongs to the POU transcription factor family. Class-4 subfamily. Interacts (via N-terminus) with RIT2; the interaction controls POU4F1 transactivation activity on some neuronal target genes. Isoform 1 interacts with POU4F2 isoform 2; this interaction inhibits both POU4F1 DNA-binding and transcriptional activities. Isoform 1 interacts (C-terminus) with ESR1 (via DNA-binding domain); this interaction decreases the estrogen receptor ESR1 transcriptional activity in a DNA- and ligand 17-beta-estradiol-independent manner. In terms of tissue distribution, expressed in mature osteoclasts (at protein level). Brain, peripheral sensory nervous system and retina. In the adult nervous system, predominates in the medial habenula, superficial gray of the superior colliculus, red nucleus, mesencephalic nucleus of the trigeminal ganglion, nucleus ambiguus, inferior olivary nucleus, and peripheral sensory ganglia.

The protein resides in the nucleus. It is found in the cytoplasm. In terms of biological role, multifunctional transcription factor with different regions mediating its different effects. Acts by binding (via its C-terminal domain) to sequences related to the consensus octamer motif 5'-ATGCAAAT-3' in the regulatory regions of its target genes. Regulates the expression of specific genes involved in differentiation and survival within a subset of neuronal lineages. It has been shown that activation of some of these genes requires its N-terminal domain, maybe through a neuronal-specific cofactor. Activates BCL2 expression and protects neuronal cells from apoptosis (via the N-terminal domain). Induces neuronal process outgrowth and the coordinate expression of genes encoding synaptic proteins. Exerts its major developmental effects in somatosensory neurons and in brainstem nuclei involved in motor control. Stimulates the binding affinity of the nuclear estrogene receptor ESR1 to DNA estrogen response element (ERE), and hence modulates ESR1-induced transcriptional activity. May positively regulate POU4F2 and POU4F3. Regulates dorsal root ganglion sensory neuron specification and axonal projection into the spinal cord. Plays a role in TNFSF11-mediated terminal osteoclast differentiation. Negatively regulates its own expression interacting directly with a highly conserved autoregulatory domain surrounding the transcription initiation site. Functionally, able to act as transcription factor, cannot regulate the expression of the same subset of genes than isoform 1. Does not have antiapoptotic effect on neuronal cells. The chain is POU domain, class 4, transcription factor 1 (Pou4f1) from Mus musculus (Mouse).